The following is a 235-amino-acid chain: Tetraspanin-8 (235 aa).

The Cytoplasmic portion of the chain corresponds to 1–12; the sequence is MAGVSSCLKYSM. A helical transmembrane segment spans residues 13 to 33; the sequence is FFFNFLFWVCGTLILGLAIWV. The Extracellular segment spans residues 34–52; the sequence is RVSKDGKEIITSGDSSTNP. A helical transmembrane segment spans residues 53–73; that stretch reads FIAVNILIAVGSIIMVLGFLG. At 74–84 the chain is on the cytoplasmic side; sequence CCGAVKESRCM. The chain crosses the membrane as a helical span at residues 85–105; sequence LLLFFIGLLLILILQVAAGIL. Residues 106–203 lie on the Extracellular side of the membrane; sequence GAAFKPEYNR…SLIKDLFEKN (98 aa). Asn-118 carries N-linked (GlcNAc...) asparagine glycosylation. A helical transmembrane segment spans residues 204-224; sequence IIIVIGIAFGLAVIEILGLVF. Residues 225–235 lie on the Cytoplasmic side of the membrane; it reads SMVLYCQIGSK.

Belongs to the tetraspanin (TM4SF) family. In terms of assembly, forms homooligomers. Interacts with MEP1B. Interacts with integrin alpha3/ITGA3. Interacts with RICTOR and MTOR. Interacts with ADAM17. Interacts with ECE1.

It is found in the cell membrane. In terms of biological role, structural component of specialized membrane microdomains known as tetraspanin-enriched microdomains (TERMs), which act as platforms for receptor clustering and signaling. Participates thereby in diverse biological functions such as cell signal transduction, migration and protein trafficking. Promotes ADAM17-mediated TNF-alpha processing through recruitment of ADAM17 to tetraspanin-enriched micro-domains (TEMs). Forms a complex with RICTOR and integrin alpha3/ITGA3 to mediate mTORC2 activation and AKT1 phosphorylation leading to cell migration. Reduces apoptosis and autophagy induced by high glucose levels through forming a complex with mTOR and RICTOR. Contributes to the maintenance of intestinal epithelial barrier and plays a role in the regulation of intestine inflammation by switching interferon gamma receptor 1/IFNGR1 from clathrin-dependent to lipid raft-dependent endocytosis route to limit STAT1 activation magnitude and duration. Acts as a modulator of the endothelin axis by associating with endothelin converting enzyme ECE1 and regulating its activity of conversion of the endothelin-1 precursor to endothelin. This chain is Tetraspanin-8 (Tspan8), found in Mus musculus (Mouse).